A 214-amino-acid polypeptide reads, in one-letter code: Response regulator GacA (214 aa).

The region spanning 3–119 is the Response regulatory domain; the sequence is KVLVVDDHDL…EMVQAIRLVF (117 aa). Aspartate 54 carries the 4-aspartylphosphate modification. The HTH luxR-type domain maps to 143 to 208; sequence NNSPFDLLSE…ELALLAVRHG (66 aa). Positions 167 to 186 form a DNA-binding region, H-T-H motif; sequence VQTISDKLCLSPKTVNTYRY.

In terms of processing, phosphorylated by LemA.

Functionally, forms part of a two-component regulatory system GacA/GacA(LemA). May be involved in lesion formation, swarming and in the production of extracellular protease, syringomycin and N-acyl-L-homoserine lactone (acyl-HSL). The protein is Response regulator GacA (gacA) of Pseudomonas syringae pv. syringae (strain B728a).